The primary structure comprises 224 residues: Inhibitor of apoptosis protein (224 aa).

One copy of the BIR repeat lies at 29–92; the sequence is VDARNQSFAI…GFWSRNCGFM (64 aa). C62, C65, H82, and C89 together coordinate Zn(2+). The C4-type zinc-finger motif lies at 189-207; the sequence is CMTCGIEPIKKDENFCNAC.

Belongs to the asfivirus IAP family. As to quaternary structure, interacts with subunit p17 of host CASP3.

It is found in the host cytoplasm. It localises to the virion. In terms of biological role, prevent apoptosis of host cell by inhibiting caspase-3/CASP3 activation to promote the viral replication. Also induces the activation of host NF-kappaB. This Ornithodoros (relapsing fever ticks) protein is Inhibitor of apoptosis protein.